A 498-amino-acid polypeptide reads, in one-letter code: Pre-glycoprotein polyprotein GP complex (498 aa).

The N-myristoyl glycine; by host moiety is linked to residue Gly2. Residues 2–17 (GQIVTMFEALPHIIDE) lie on the Extracellular side of the membrane. The helical transmembrane segment at 18–33 (VINIVIIVLIIITSIK) threads the bilayer. The Cytoplasmic portion of the chain corresponds to 34-58 (AVYNFATCGILALVSFLFLAGRSCG). Cys57 contributes to the Zn(2+) binding site. Residues 59-438 (MYGLNGPDIY…QGSTPLALMD (380 aa)) lie on the Extracellular side of the membrane. N-linked (GlcNAc...) asparagine; by host glycans are attached at residues Asn85, Asn95, Asn114, Asn124, and Asn171. Intrachain disulfides connect Cys92-Cys239, Cys123-Cys160, Cys184-Cys220, Cys285-Cys298, Cys307-Cys316, and Cys370-Cys391. A glycan (N-linked (GlcNAc...) asparagine; by host) is linked at Asn232. N-linked (GlcNAc...) asparagine; by host glycosylation is found at Asn371, Asn396, and Asn401. The chain crosses the membrane as a helical span at residues 439–459 (LLMFSTSAYLISIFLHFVRIP). Over 460-498 (THRHIKGGSCPKPHRLTNKGICSCGAFKVPGVKTIWKRR) the chain is Cytoplasmic. 6 residues coordinate Zn(2+): His461, His463, Cys469, His473, Cys481, and Cys483.

This sequence belongs to the arenaviridae GPC protein family. In terms of assembly, interacts with glycoprotein G2. Part of the GP complex (GP-C) together with glycoprotein G1 and glycoprotein G2. The GP-complex interacts with protein Z, which interacts with ribonucleocapsid; these interactions may induce virion budding. As to quaternary structure, homotrimer; disulfide-linked. In pre-fusion state, G1 homotrimers bind G2 homotrimers via ionic interactions. Part of the GP complex (GP-C) together with glycoprotein G2 and the stable signal peptide. Interacts with the primary host receptor DAG1 on the cell surface. The GP-complex interacts with protein Z, which interacts with ribonucleocapsid; these interactions may induce virion budding. Homotrimer. Interacts with the stable signal peptide. In pre-fusion state, G2 homotrimers bind G1 homotrimers via ionic interactions. Part of the GP complex (GP-C) together with glycoprotein G1 and the stable signal peptide. Acidification in the endosome triggers rearrangements, which ultimately leads to a 6 helix bundle formed by the two heptad repeat domains (HR1 and HR2) in post-fusion state. The GP-complex interacts with protein Z, which interacts with ribonucleocapsid; these interactions may induce virion budding. Specific enzymatic cleavages in vivo yield mature proteins. GP-C polyprotein is cleaved in the endoplasmic reticulum by the host protease MBTPS1. Only cleaved glycoprotein is incorporated into virions. In terms of processing, the SSP remains stably associated with the GP complex following cleavage by signal peptidase and plays crucial roles in the trafficking of GP through the secretory pathway. Post-translationally, myristoylation is necessary for GP2-mediated fusion activity.

The protein localises to the virion membrane. The protein resides in the host endoplasmic reticulum membrane. It is found in the host Golgi apparatus membrane. Its subcellular location is the host cell membrane. In terms of biological role, functions as a cleaved signal peptide that is retained as the third component of the GP complex (GP-C). Helps to stabilize the spike complex in its native conformation. The SSP is required for efficient glycoprotein expression, post-translational maturation cleavage of G1 and G2, glycoprotein transport to the cell surface plasma membrane, formation of infectious virus particles, and acid pH-dependent glycoprotein-mediated cell fusion. Its function is as follows. Forms the virion spikes together with glycoprotein G2. The glycoprotein spike trimers are connected to the underlying matrix. Interacts with the host receptor. Mediates virus attachment to the host primary receptor alpha-dystroglycan DAG1 (alpha-DG) at the cell surface. Down-modulates host DAG1. Forms the virion spikes together with glycoprotein G1. The glycoprotein spike trimers are connected to the underlying matrix. Class I viral fusion protein that directs fusion of viral and host endosomal membranes, leading to delivery of the nucleocapsid into the cytoplasm. Membrane fusion is mediated by irreversible conformational changes induced by acidification. This is Pre-glycoprotein polyprotein GP complex from Homo sapiens (Human).